The primary structure comprises 703 residues: Methionine--tRNA ligase (703 aa).

A 'HIGH' region motif is present at residues 12 to 22 (PYANGPLHIGH). 4 residues coordinate Zn(2+): Cys-143, Cys-146, Cys-156, and Cys-159. The short motif at 331-335 (KMSKT) is the 'KMSKS' region element. Lys-334 is an ATP binding site. 2 stretches are compositionally biased toward low complexity: residues 556–568 (AAPQ…PAKG) and 577–594 (EAPA…AAES). 2 disordered regions span residues 556-594 (AAPQ…AAES) and 682-703 (GPGG…SEVK). A tRNA-binding domain is found at 602 to 703 (DFAKVVLKAG…GDVAPGSEVK (102 aa)).

The protein belongs to the class-I aminoacyl-tRNA synthetase family. MetG type 1 subfamily. In terms of assembly, homodimer. Zn(2+) is required as a cofactor.

It localises to the cytoplasm. The catalysed reaction is tRNA(Met) + L-methionine + ATP = L-methionyl-tRNA(Met) + AMP + diphosphate. Its function is as follows. Is required not only for elongation of protein synthesis but also for the initiation of all mRNA translation through initiator tRNA(fMet) aminoacylation. The chain is Methionine--tRNA ligase from Myxococcus xanthus (strain DK1622).